A 323-amino-acid polypeptide reads, in one-letter code: Acetyl-coenzyme A carboxylase carboxyl transferase subunit alpha (323 aa).

A CoA carboxyltransferase C-terminal domain is found at 39-293 (RLAGKSQQLT…KRSLAESLRQ (255 aa)).

Belongs to the AccA family. Acetyl-CoA carboxylase is a heterohexamer composed of biotin carboxyl carrier protein (AccB), biotin carboxylase (AccC) and two subunits each of ACCase subunit alpha (AccA) and ACCase subunit beta (AccD).

The protein resides in the cytoplasm. The enzyme catalyses N(6)-carboxybiotinyl-L-lysyl-[protein] + acetyl-CoA = N(6)-biotinyl-L-lysyl-[protein] + malonyl-CoA. The protein operates within lipid metabolism; malonyl-CoA biosynthesis; malonyl-CoA from acetyl-CoA: step 1/1. Its function is as follows. Component of the acetyl coenzyme A carboxylase (ACC) complex. First, biotin carboxylase catalyzes the carboxylation of biotin on its carrier protein (BCCP) and then the CO(2) group is transferred by the carboxyltransferase to acetyl-CoA to form malonyl-CoA. The polypeptide is Acetyl-coenzyme A carboxylase carboxyl transferase subunit alpha (Cupriavidus pinatubonensis (strain JMP 134 / LMG 1197) (Cupriavidus necator (strain JMP 134))).